Here is a 238-residue protein sequence, read N- to C-terminus: Opacity protein opA60 (238 aa).

A signal peptide is located at residue alanine 1.

This sequence belongs to the opacity porin family.

It localises to the cell outer membrane. In terms of biological role, implicated in a number of adherence functions. OPA proteins are implicated in pathogenesis and are subject to phase variation. The chain is Opacity protein opA60 (opaH) from Neisseria gonorrhoeae.